We begin with the raw amino-acid sequence, 209 residues long: uncharacterized protein (209 aa).

This sequence belongs to the flavoredoxin family. The cofactor is FMN.

This is an uncharacterized protein from Halalkalibacterium halodurans (strain ATCC BAA-125 / DSM 18197 / FERM 7344 / JCM 9153 / C-125) (Bacillus halodurans).